The primary structure comprises 221 residues: Potassium voltage-gated channel subfamily E member 4 (221 aa).

Residues methionine 1–glutamate 86 lie on the Extracellular side of the membrane. N-linked (GlcNAc...) asparagine glycosylation is present at asparagine 9. The span at leucine 58 to leucine 72 shows a compositional bias: polar residues. Positions leucine 58–alanine 77 are disordered. A helical transmembrane segment spans residues tyrosine 87–glycine 107. Residues tyrosine 108–serine 221 lie on the Cytoplasmic side of the membrane. Residues serine 175 to serine 221 form a disordered region. Residues glutamate 192–serine 202 show a composition bias toward acidic residues. Residues glutamate 203–serine 221 show a composition bias toward polar residues.

Belongs to the potassium channel KCNE family. As to quaternary structure, forms heterooligomers with KCNA3, inhibiting its activity by impairing localization to the cell membrane. The stoichiometry of KCNA3 and KCNE4 in the heterooligomers are 4:1, 4:2, 4:3 or 4:4 respectively. Increasing the number of KCNE4 subunits steadily slows the activation KCNA3 and decreases its abundance at the cell membrane. However, a single subunit of KCNE4 is sufficient for the cooperative enhancement of the inactivating function of the channel. However, a single subunit of KCNE4 is sufficient for the cooperative enhancement of the inactivating function of the channel. Interacts with KCNQ1; impairs KCNQ1 localization in lipid rafts and inhibits voltage-gated potassium channel activity. As to expression, predominantly expressed in embryo and adult uterus. Low expression found in kidney, small intestine, lung and heart. In terms of tissue distribution, detected in kidney, thymus, and uterus (at protein level).

It localises to the membrane. Ancillary protein that functions as a regulatory subunit of the voltage-gated potassium (Kv) channel complex composed of pore-forming and potassium-conducting alpha subunits and of regulatory beta subunits. KCNE4 beta subunit modulates the gating kinetics and enhances stability of the channel complex. Associates with KCNQ1/KVLTQ1 alpha subunit to inhibit potassium currents. Its function is as follows. May inhibit KCNQ4-mediated potassium currents. The chain is Potassium voltage-gated channel subfamily E member 4 from Homo sapiens (Human).